A 570-amino-acid chain; its full sequence is Protein NRT1/ PTR FAMILY 8.1 (570 aa).

A Phosphothreonine modification is found at Thr-98. The next 10 membrane-spanning stretches (helical) occupy residues 99 to 119 (IATF…SASV), 140 to 160 (AVFF…KPCV), 182 to 202 (FFNW…TVLV), 210 to 230 (WGWG…FFFF), 329 to 349 (IITL…YSQM), 377 to 397 (LFDT…IIPL), 414 to 434 (MGIG…LEVV), 454 to 474 (IFWQ…TFIG), 494 to 514 (LSLT…TVVM), and 537 to 557 (YFFY…LWIS).

Belongs to the major facilitator superfamily. Proton-dependent oligopeptide transporter (POT/PTR) (TC 2.A.17) family. In terms of tissue distribution, expressed in cotyledons, hypocotyls, leaves, roots, flowers, pistils and vascular tissue of sepals, anthers, carpels and funiculi. Not detected in seeds.

It is found in the cell membrane. In terms of biological role, peptide transporter. Mediates the transport of di- and tripeptides. High affinity transporter with low selectivity. No transport of amino acids. This chain is Protein NRT1/ PTR FAMILY 8.1 (NPF8.1), found in Arabidopsis thaliana (Mouse-ear cress).